We begin with the raw amino-acid sequence, 328 residues long: 5'-AMP-activated protein kinase subunit gamma (328 aa).

CBS domains lie at 42 to 103 (VSYR…PDKF), 123 to 186 (IQPY…CKEI), 199 to 259 (ISTN…YNDL), and 268 to 328 (MRRS…FAES). ADP contacts are provided by residues I47, R150, R151, 171–174 (TQYR), 227–228 (SS), and 297–299 (RVH). Residue R150 coordinates AMP. An ATP-binding site is contributed by R150. 227 to 228 (SS) serves as a coordination point for AMP. ATP is bound at residue 227–228 (SS). ATP-binding positions include R300 and 313 to 318 (VLTLSD). Position 315–318 (315–318 (TLSD)) interacts with ADP. 315-318 (TLSD) is an AMP binding site.

The protein belongs to the 5'-AMP-activated protein kinase gamma subunit family. AMPK is a heterotrimer of an alpha catalytic subunit, a beta and a gamma non-catalytic subunits.

It localises to the nucleus. It is found in the cytoplasm. In terms of biological role, adenine nucleotides-binding subunit gamma of AMP-activated protein kinase (AMPK), an energy sensor protein kinase that plays a key role in regulating cellular energy metabolism. In response to reduction of intracellular ATP levels, AMPK activates energy-producing pathways and inhibits energy-consuming processes: inhibits protein, carbohydrate and lipid biosynthesis, as well as cell growth and proliferation. AMPK acts via direct phosphorylation of metabolic enzymes, and by longer-term effects via phosphorylation of transcription regulators. Gamma non-catalytic subunit mediates binding to AMP, ADP and ATP, leading to activate or inhibit AMPK: AMP-binding results in allosteric activation of alpha catalytic subunit (SNF1) both by inducing phosphorylation and preventing dephosphorylation of catalytic subunits. The protein is 5'-AMP-activated protein kinase subunit gamma (SNF4) of Kluyveromyces lactis (strain ATCC 8585 / CBS 2359 / DSM 70799 / NBRC 1267 / NRRL Y-1140 / WM37) (Yeast).